The primary structure comprises 353 residues: Photosystem II protein D1 (353 aa).

The residue at position 2 (Thr-2) is an N-acetylthreonine. Thr-2 carries the phosphothreonine modification. Transmembrane regions (helical) follow at residues 29 to 46 (YIGWFGVLMIPTLLTATS), 118 to 133 (HFLLGVACYMGREWEL), and 142 to 156 (WIAVAYSAPVAAATA). His-118 contributes to the chlorophyll a binding site. Residue Tyr-126 coordinates pheophytin a. Residues Asp-170 and Glu-189 each coordinate [CaMn4O5] cluster. The helical transmembrane segment at 197-218 (FHMLGVAGVFGGSLFSAMHGSL) threads the bilayer. Residue His-198 coordinates chlorophyll a. Residues His-215 and 264-265 (SF) each bind a quinone. Position 215 (His-215) interacts with Fe cation. His-272 contributes to the Fe cation binding site. Residues 274–288 (FLAAWPVVGIWFTAL) traverse the membrane as a helical segment. Positions 332, 333, 342, and 344 each coordinate [CaMn4O5] cluster. Positions 345-353 (AVEAPSING) are excised as a propeptide.

It belongs to the reaction center PufL/M/PsbA/D family. PSII is composed of 1 copy each of membrane proteins PsbA, PsbB, PsbC, PsbD, PsbE, PsbF, PsbH, PsbI, PsbJ, PsbK, PsbL, PsbM, PsbT, PsbX, PsbY, PsbZ, Psb30/Ycf12, at least 3 peripheral proteins of the oxygen-evolving complex and a large number of cofactors. It forms dimeric complexes. The cofactor is The D1/D2 heterodimer binds P680, chlorophylls that are the primary electron donor of PSII, and subsequent electron acceptors. It shares a non-heme iron and each subunit binds pheophytin, quinone, additional chlorophylls, carotenoids and lipids. D1 provides most of the ligands for the Mn4-Ca-O5 cluster of the oxygen-evolving complex (OEC). There is also a Cl(-1) ion associated with D1 and D2, which is required for oxygen evolution. The PSII complex binds additional chlorophylls, carotenoids and specific lipids.. In terms of processing, tyr-161 forms a radical intermediate that is referred to as redox-active TyrZ, YZ or Y-Z. Post-translationally, C-terminally processed by CTPA; processing is essential to allow assembly of the oxygen-evolving complex and thus photosynthetic growth.

It localises to the plastid. The protein localises to the chloroplast thylakoid membrane. The catalysed reaction is 2 a plastoquinone + 4 hnu + 2 H2O = 2 a plastoquinol + O2. Its function is as follows. Photosystem II (PSII) is a light-driven water:plastoquinone oxidoreductase that uses light energy to abstract electrons from H(2)O, generating O(2) and a proton gradient subsequently used for ATP formation. It consists of a core antenna complex that captures photons, and an electron transfer chain that converts photonic excitation into a charge separation. The D1/D2 (PsbA/PsbD) reaction center heterodimer binds P680, the primary electron donor of PSII as well as several subsequent electron acceptors. This chain is Photosystem II protein D1, found in Lotus japonicus (Lotus corniculatus var. japonicus).